The sequence spans 228 residues: 2,3-bisphosphoglycerate-dependent phosphoglycerate mutase (228 aa).

Residues 8–15, 21–22, Arg-60, 87–90, Lys-98, 114–115, and 180–181 contribute to the substrate site; these read RHGQSAWN, TG, ERHY, RR, and GN. The Tele-phosphohistidine intermediate role is filled by His-9. The active-site Proton donor/acceptor is the Glu-87.

The protein belongs to the phosphoglycerate mutase family. BPG-dependent PGAM subfamily. Homodimer.

The catalysed reaction is (2R)-2-phosphoglycerate = (2R)-3-phosphoglycerate. The protein operates within carbohydrate degradation; glycolysis; pyruvate from D-glyceraldehyde 3-phosphate: step 3/5. In terms of biological role, catalyzes the interconversion of 2-phosphoglycerate and 3-phosphoglycerate. The polypeptide is 2,3-bisphosphoglycerate-dependent phosphoglycerate mutase (Rhizorhabdus wittichii (strain DSM 6014 / CCUG 31198 / JCM 15750 / NBRC 105917 / EY 4224 / RW1) (Sphingomonas wittichii)).